A 105-amino-acid polypeptide reads, in one-letter code: uncharacterized protein (105 aa).

A helical membrane pass occupies residues 41–62 (GIITKIAASPFVIVLYFNTAFF).

The protein resides in the membrane. This is an uncharacterized protein from Saccharomyces cerevisiae (strain ATCC 204508 / S288c) (Baker's yeast).